The sequence spans 330 residues: MARKGVDVAVALVLVALAAFPAVHSIGVCNGVLGNNLPAPSDVVTLYRSKRIDAMRIYEPESKVLTALSGTGIAVLMDVGPALPSLASSPSAAAAWVKANVSSFPGVSFRYIAVRNEVMDSAGQSTILPAMRNVQRALAAAGSPIKVSTSVRFDVFNNTSPPSNGVLADKSGFLRPILNFLARPARPLLANVYPYFAYKGNPRDIQLTFATFVPGSTTVNDNGLTYTNLFDAMVDSIYAALEKAGTPGVKVVISESGWPSDQGFGATAQNARAYNQGLINHVGNGSPKKAGALESYIFAMFNENLKDGDELEKNFGLFKPNMSPAYAITF.

The N-terminal stretch at 1–25 is a signal peptide; that stretch reads MARKGVDVAVALVLVALAAFPAVHS. Glu117 functions as the Proton donor in the catalytic mechanism. The Nucleophile role is filled by Glu255.

It belongs to the glycosyl hydrolase 17 family.

It carries out the reaction Hydrolysis of (1-&gt;3)-beta-D-glucosidic linkages in (1-&gt;3)-beta-D-glucans.. In terms of biological role, may provide a degree of protection against microbial invasion of germinated barley grain through its ability to degrade fungal cell wall polysaccharides. This Hordeum vulgare (Barley) protein is Glucan endo-1,3-beta-glucosidase GIII.